A 125-amino-acid chain; its full sequence is Succinate dehydrogenase assembly factor 3, mitochondrial (125 aa).

A mitochondrion-targeting transit peptide spans 1–30 (MPGKHVSRVRALYRRILLLHRALPPDLKAL).

This sequence belongs to the complex I LYR family. SDHAF3 subfamily. As to quaternary structure, interacts with Sdhb within an Sdha-Sdhb subcomplex.

The protein localises to the mitochondrion matrix. Its function is as follows. Plays an essential role in the assembly of succinate dehydrogenase (SDH), an enzyme complex (also referred to as respiratory complex II) that is a component of both the tricarboxylic acid (TCA) cycle and the mitochondrial electron transport chain, and which couples the oxidation of succinate to fumarate with the reduction of ubiquinone (coenzyme Q) to ubiquinol. Promotes maturation of the iron-sulfur protein subunit Sdhb of the SDH catalytic dimer, protecting it from the deleterious effects of oxidants. May act together with SDHAF1. This is Succinate dehydrogenase assembly factor 3, mitochondrial from Mus musculus (Mouse).